The chain runs to 438 residues: 23S rRNA (uracil(1939)-C(5))-methyltransferase RlmD (438 aa).

The 59-residue stretch at 11–69 folds into the TRAM domain; sequence LQPESKHQQVLVEKLDHQGAGIAYLNKKPLFIDGTLPGEEVVTQLTESKSKFARGKLIK. Cysteine 82, cysteine 88, cysteine 91, and cysteine 169 together coordinate [4Fe-4S] cluster. S-adenosyl-L-methionine contacts are provided by glutamine 272, phenylalanine 301, asparagine 306, glutamate 322, asparagine 349, and aspartate 370. Cysteine 396 (nucleophile) is an active-site residue.

This sequence belongs to the class I-like SAM-binding methyltransferase superfamily. RNA M5U methyltransferase family. RlmD subfamily.

The catalysed reaction is uridine(1939) in 23S rRNA + S-adenosyl-L-methionine = 5-methyluridine(1939) in 23S rRNA + S-adenosyl-L-homocysteine + H(+). Catalyzes the formation of 5-methyl-uridine at position 1939 (m5U1939) in 23S rRNA. In Vibrio vulnificus (strain YJ016), this protein is 23S rRNA (uracil(1939)-C(5))-methyltransferase RlmD.